A 244-amino-acid chain; its full sequence is MSDPAPEIEAPVEAAPVASPPKGKKEKAPKAPKSPKAEKPKSDKPKKPKVAPTHPPVSEMVVNAVTTLKERGGSSLIAIKKFVAAQYKVDVEKLVPFIKKFLKSSVAKGTLLQAKGKGASGSFKLPPAAKKVEKKPKKVPSTPKPKTTKPKRVTGEKKVVKKPAAKKPEAKKATKAAKPATKKVVAKPASKKAAAPKPKAAKPAAKKPEAKKATKAAAKKPVAKPVAKKPAAKPAKKPAAKKAK.

Residues 1–21 are compositionally biased toward low complexity; the sequence is MSDPAPEIEAPVEAAPVASPP. 2 disordered regions span residues 1-59 and 113-244; these read MSDP…PVSE and QAKG…KKAK. The segment covering 35 to 45 has biased composition (basic and acidic residues); it reads PKAEKPKSDKP. An H15 domain is found at 53-127; that stretch reads THPPVSEMVV…GASGSFKLPP (75 aa). The segment covering 186–203 has biased composition (low complexity); that stretch reads AKPASKKAAAPKPKAAKP. Over residues 213 to 244 the composition is skewed to basic residues; that stretch reads ATKAAAKKPVAKPVAKKPAAKPAKKPAAKKAK.

Belongs to the histone H1/H5 family.

The protein resides in the nucleus. The protein localises to the chromosome. In terms of biological role, histones H1 are necessary for the condensation of nucleosome chains into higher-order structures. The chain is Histone H1, orphon from Chironomus thummi thummi (Midge).